We begin with the raw amino-acid sequence, 178 residues long: MAKHKQEEHPEDVEVKEEAVETAEQAESASPEKSELELANERAEDFENKYLRAHAEMQNIQRRANEERQQLQRYRSQDLAKAILPSIDNLERALAVEGLTDDVKKGLEMVQESLIHALKEEGIEEIPADGAFDHNYHMAIQTVPADDEHPADTIAQVFQKGYKLHDRILRPAMVVVYN.

Basic and acidic residues-rich tracts occupy residues 1–19 and 30–42; these read MAKH…KEEA and SPEK…ANER. The disordered stretch occupies residues 1-42; sequence MAKHKQEEHPEDVEVKEEAVETAEQAESASPEKSELELANER.

Belongs to the GrpE family. In terms of assembly, homodimer.

The protein localises to the cytoplasm. Its function is as follows. Participates actively in the response to hyperosmotic and heat shock by preventing the aggregation of stress-denatured proteins, in association with DnaK and GrpE. It is the nucleotide exchange factor for DnaK and may function as a thermosensor. Unfolded proteins bind initially to DnaJ; upon interaction with the DnaJ-bound protein, DnaK hydrolyzes its bound ATP, resulting in the formation of a stable complex. GrpE releases ADP from DnaK; ATP binding to DnaK triggers the release of the substrate protein, thus completing the reaction cycle. Several rounds of ATP-dependent interactions between DnaJ, DnaK and GrpE are required for fully efficient folding. The protein is Protein GrpE of Streptococcus sanguinis (strain SK36).